We begin with the raw amino-acid sequence, 427 residues long: Flotillin-1 (427 aa).

S19, S163, and S385 each carry phosphoserine.

The protein belongs to the band 7/mec-2 family. Flotillin subfamily. Heterooligomeric complex of flotillin-1 and flotillin-2 and caveolin-1 and caveolin-2. Interacts with ECPAS.

It is found in the cell membrane. The protein localises to the endosome. The protein resides in the membrane. Its subcellular location is the caveola. It localises to the melanosome. It is found in the membrane raft. Functionally, may act as a scaffolding protein within caveolar membranes, functionally participating in formation of caveolae or caveolae-like vesicles. This Bos taurus (Bovine) protein is Flotillin-1 (FLOT1).